A 554-amino-acid polypeptide reads, in one-letter code: Probable pectinesterase/pectinesterase inhibitor 6 (554 aa).

An N-terminal signal peptide occupies residues 1–32 (MDHKILLTPPKSLYTKCIITIIYVVSISHLNA). A pectinesterase inhibitor 6 region spans residues 29–183 (HLNAHFITSC…TKSISNSLAV (155 aa)). Asparagine 119 and asparagine 172 each carry an N-linked (GlcNAc...) asparagine glycan. The segment at 250–540 (DLVVAKDGSG…FTVENFLDGN (291 aa)) is pectinesterase 6. Substrate is bound by residues threonine 327 and glutamine 357. The active-site Proton donor; for pectinesterase activity is aspartate 380. An intrachain disulfide couples cysteine 394 to cysteine 414. Aspartate 401 serves as the catalytic Nucleophile; for pectinesterase activity. Substrate is bound by residues arginine 460 and tryptophan 462.

The protein in the N-terminal section; belongs to the PMEI family. This sequence in the C-terminal section; belongs to the pectinesterase family. Expressed in rosette leaves, flower and siliques.

The protein localises to the secreted. The protein resides in the cell wall. It catalyses the reaction [(1-&gt;4)-alpha-D-galacturonosyl methyl ester](n) + n H2O = [(1-&gt;4)-alpha-D-galacturonosyl](n) + n methanol + n H(+). It functions in the pathway glycan metabolism; pectin degradation; 2-dehydro-3-deoxy-D-gluconate from pectin: step 1/5. Functionally, acts in the modification of cell walls via demethylesterification of cell wall pectin. In Arabidopsis thaliana (Mouse-ear cress), this protein is Probable pectinesterase/pectinesterase inhibitor 6 (PME6).